The chain runs to 173 residues: Crossover junction endodeoxyribonuclease RuvC (173 aa).

Catalysis depends on residues Asp-8, Glu-67, and Asp-139. Residues Asp-8, Glu-67, and Asp-139 each contribute to the Mg(2+) site.

The protein belongs to the RuvC family. In terms of assembly, homodimer which binds Holliday junction (HJ) DNA. The HJ becomes 2-fold symmetrical on binding to RuvC with unstacked arms; it has a different conformation from HJ DNA in complex with RuvA. In the full resolvosome a probable DNA-RuvA(4)-RuvB(12)-RuvC(2) complex forms which resolves the HJ. Mg(2+) serves as cofactor.

It localises to the cytoplasm. It carries out the reaction Endonucleolytic cleavage at a junction such as a reciprocal single-stranded crossover between two homologous DNA duplexes (Holliday junction).. Functionally, the RuvA-RuvB-RuvC complex processes Holliday junction (HJ) DNA during genetic recombination and DNA repair. Endonuclease that resolves HJ intermediates. Cleaves cruciform DNA by making single-stranded nicks across the HJ at symmetrical positions within the homologous arms, yielding a 5'-phosphate and a 3'-hydroxyl group; requires a central core of homology in the junction. The consensus cleavage sequence is 5'-(A/T)TT(C/G)-3'. Cleavage occurs on the 3'-side of the TT dinucleotide at the point of strand exchange. HJ branch migration catalyzed by RuvA-RuvB allows RuvC to scan DNA until it finds its consensus sequence, where it cleaves and resolves the cruciform DNA. The sequence is that of Crossover junction endodeoxyribonuclease RuvC from Shewanella piezotolerans (strain WP3 / JCM 13877).